A 304-amino-acid polypeptide reads, in one-letter code: Ferredoxin fas2 (304 aa).

The 4Fe-4S ferredoxin-type domain maps to 2–29 (KVVVNERRCFGSGQCVLVAPEVFEQSND). Residues cysteine 10, cysteine 16, and cysteine 54 each contribute to the [3Fe-4S] cluster site. The interval 66–304 (MRQEPTEFSY…QSARSSIQQR (239 aa)) is transketolase-like.

This sequence in the C-terminal section; belongs to the transketolase family. [3Fe-4S] cluster serves as cofactor.

In terms of biological role, plays a role in electron transfer. The fas operon encodes genes involved in cytokinin production and in host plant fasciation (leafy gall). This Rhodococcoides fascians (Rhodococcus fascians) protein is Ferredoxin fas2 (fas2).